Reading from the N-terminus, the 737-residue chain is Acetylcholinesterase (737 aa).

A signal peptide spans Met-1–Val-38. Residues His-141–Val-168 are disordered. Asn-220 is a glycosylation site (N-linked (GlcNAc...) asparagine). A disulfide bridge links Cys-228 with Cys-255. The active-site Acyl-ester intermediate is Ser-360. Cys-414 and Cys-427 are disulfide-bonded. Active-site charge relay system residues include Glu-486 and His-600. The cysteines at positions 562 and 683 are disulfide-linked. Asn-670 is a glycosylation site (N-linked (GlcNAc...) asparagine).

This sequence belongs to the type-B carboxylesterase/lipase family.

The protein localises to the synapse. The enzyme catalyses acetylcholine + H2O = choline + acetate + H(+). In terms of biological role, rapidly hydrolyzes choline released into the synapse. This Anopheles gambiae (African malaria mosquito) protein is Acetylcholinesterase (Ace).